We begin with the raw amino-acid sequence, 321 residues long: Phospho-N-acetylmuramoyl-pentapeptide-transferase (321 aa).

Transmembrane regions (helical) follow at residues 1–21 (MVYL…PVLI), 50–70 (MGGL…IIFI), 76–96 (IILL…DDYI), 112–132 (FLAQ…FNLT), 140–160 (IPFI…IVFW), 173–193 (GLDG…AIMA), 198–218 (ATSI…FLPF), 225–245 (VFMG…ISIM), 250–270 (LSLL…MIQV), and 300–320 (VVTV…WIGV).

This sequence belongs to the glycosyltransferase 4 family. MraY subfamily. Requires Mg(2+) as cofactor.

The protein resides in the cell membrane. It catalyses the reaction UDP-N-acetyl-alpha-D-muramoyl-L-alanyl-gamma-D-glutamyl-L-lysyl-D-alanyl-D-alanine + di-trans,octa-cis-undecaprenyl phosphate = Mur2Ac(oyl-L-Ala-gamma-D-Glu-L-Lys-D-Ala-D-Ala)-di-trans,octa-cis-undecaprenyl diphosphate + UMP. Its pathway is cell wall biogenesis; peptidoglycan biosynthesis. In terms of biological role, catalyzes the initial step of the lipid cycle reactions in the biosynthesis of the cell wall peptidoglycan: transfers peptidoglycan precursor phospho-MurNAc-pentapeptide from UDP-MurNAc-pentapeptide onto the lipid carrier undecaprenyl phosphate, yielding undecaprenyl-pyrophosphoryl-MurNAc-pentapeptide, known as lipid I. This is Phospho-N-acetylmuramoyl-pentapeptide-transferase from Staphylococcus saprophyticus subsp. saprophyticus (strain ATCC 15305 / DSM 20229 / NCIMB 8711 / NCTC 7292 / S-41).